Reading from the N-terminus, the 62-residue chain is Beta-defensin 110 (62 aa).

A signal peptide spans 1–21 (MKIHLFFFILLFWVTILPARS). Cystine bridges form between Cys-32–Cys-60, Cys-39–Cys-53, and Cys-43–Cys-61.

This sequence belongs to the beta-defensin family.

Its subcellular location is the secreted. Has antibacterial activity. The protein is Beta-defensin 110 (DEFB110) of Canis lupus familiaris (Dog).